Here is a 499-residue protein sequence, read N- to C-terminus: Alpha-amylase A type-1/2 (499 aa).

The N-terminal stretch at 1–21 is a signal peptide; the sequence is MMVAWWSLFLYGLQVAAPALA. Residues Cys51 and Cys59 are joined by a disulfide bond. Positions 56 and 104 each coordinate substrate. Residue Asn142 coordinates Ca(2+). Residue His143 coordinates substrate. Cysteines 171 and 185 form a disulfide. Positions 183 and 196 each coordinate Ca(2+). Residue Asn218 is glycosylated (N-linked (GlcNAc...) asparagine). Arg225 contributes to the substrate binding site. Positions 227, 231, and 251 each coordinate Ca(2+). Residue Asp227 is the Nucleophile of the active site. Substrate is bound at residue 230 to 231; it reads KH. The active-site Proton donor is the Glu251. Gly255 contacts substrate. Cysteines 261 and 304 form a disulfide. Residues Asp318 and Arg365 each coordinate substrate. Cys461 and Cys496 are oxidised to a cystine.

It belongs to the glycosyl hydrolase 13 family. Monomer. Ca(2+) is required as a cofactor.

It is found in the secreted. It carries out the reaction Endohydrolysis of (1-&gt;4)-alpha-D-glucosidic linkages in polysaccharides containing three or more (1-&gt;4)-alpha-linked D-glucose units.. This chain is Alpha-amylase A type-1/2 (amy1), found in Aspergillus oryzae (strain ATCC 42149 / RIB 40) (Yellow koji mold).